The following is a 947-amino-acid chain: Altered inheritance of mitochondria protein 3 (947 aa).

Disordered stretches follow at residues M1–Q334, M354–V810, and R824–E904. Basic residues predominate over residues A36–K54. Phosphoserine occurs at positions 57, 58, and 64. Acidic residues predominate over residues D59–E69. Residues Y70–K84 are compositionally biased toward basic and acidic residues. Composition is skewed to low complexity over residues P93–Q105 and Q130–P163. Residues G177–G255 show a composition bias toward polar residues. 2 stretches are compositionally biased toward low complexity: residues Q256–Q289 and Q313–Q334. Positions M354 to Y367 are enriched in polar residues. The segment covering G379–P395 has biased composition (pro residues). Residues I466 to A475 are compositionally biased toward polar residues. Position 476 is a phosphoserine (S476). Over residues D488–T502 the composition is skewed to basic and acidic residues. Residues V633–F644 are compositionally biased toward polar residues. Residues S667–S676 are compositionally biased toward low complexity. At T729 the chain carries Phosphothreonine. The segment covering D749–K759 has biased composition (basic and acidic residues). Residues P763–T774 are compositionally biased toward polar residues. A Phosphothreonine modification is found at T861. Pro residues predominate over residues P862–V879. Basic residues predominate over residues K888–L899.

This sequence belongs to the AIM3 family. As to quaternary structure, interacts with RVS167.

The protein resides in the membrane raft. The polypeptide is Altered inheritance of mitochondria protein 3 (AIM3) (Saccharomyces cerevisiae (strain ATCC 204508 / S288c) (Baker's yeast)).